Reading from the N-terminus, the 355-residue chain is MEELTIDLKDKKYPIYIGYNILRRLIKEYWDKYSSSFLITHPFLREIYKEDLSIPEENVIYVPVGEKSKSFQEVIKISKELAKRMADRRSALFAFGGGVVGDLTGFIASIYMRGIKYIQIPTTLLSQVDSSIGGKTGINIREGKNLIGTFYHPDAVIIDIKTLDTLSEREYKSGIAEVIKYGMIMNYEFFKFLEKNVDSILSKDVDKLLYVIKESLLCKKYVVEKDEKESSLRMILNFGHTFGHAIEAKGGYRRFLHGEAVAIGMLLATYLGYKLGFCNYEVLERLKELLMLFGFKIKSPYRIEDLMEYIKRDKKAYGGKLRLILPREIGRVEIVEDIEEKDIIKILKEGDDYGK.

Residues G98 to D102, T122 to T123, K135, K144, and T162 to T165 each bind NAD(+). The Zn(2+) site is built by E177, H240, and H257.

The protein belongs to the sugar phosphate cyclases superfamily. Dehydroquinate synthase family. Co(2+) is required as a cofactor. It depends on Zn(2+) as a cofactor. NAD(+) serves as cofactor.

The protein resides in the cytoplasm. The enzyme catalyses 7-phospho-2-dehydro-3-deoxy-D-arabino-heptonate = 3-dehydroquinate + phosphate. The protein operates within metabolic intermediate biosynthesis; chorismate biosynthesis; chorismate from D-erythrose 4-phosphate and phosphoenolpyruvate: step 2/7. Functionally, catalyzes the conversion of 3-deoxy-D-arabino-heptulosonate 7-phosphate (DAHP) to dehydroquinate (DHQ). This Dictyoglomus turgidum (strain DSM 6724 / Z-1310) protein is 3-dehydroquinate synthase.